A 327-amino-acid polypeptide reads, in one-letter code: MTSIKVHCLVSCFCEIIKRRSDIDFRPFYFGLWDGDFDITEGGIISYHSENINHDHYLLWYEKLYGMKVNEWYDHAKDKDSNVETFLQLVENKPENRYVIVMVDMSLLPERENKFHQKPFPHYLMISETEKEEEWFMLDPDFRWEGNMEREKVLYSVQDNPFGGGYFIDVEEIQEPTAEMVASYFIETFKRNDNELTMELKNLIIKMANEEEGYLLSGLVAAVKQIPVLAIRKYSYEHAFAYFRETLQYSEQEFDYWCDRVEDIVQGFTNVQYRAIKMAMTNNKGMLLSIVEKLDEMNAIELQIKTELERQFLSWKEMKSNESVLVF.

The catalysed reaction is N(8)-citryl-spermidine + 3,4-dihydroxybenzoyl-[aryl-carrier protein] = N(1)-(3,4-dihydroxybenzoyl)-N(8)-citryl-spermidine + holo-[aryl-carrier protein] + H(+). It catalyses the reaction N(8),N'(8)-citryl-bis(spermidine) + 3,4-dihydroxybenzoyl-[aryl-carrier protein] = N(1)-(3,4-dihydroxybenzoyl)-N(8),N'(8)-citryl-bis(spermidine) + holo-[aryl-carrier protein] + H(+). The enzyme catalyses N(1)-(3,4-dihydroxybenzoyl)-N(8),N'(8)-citryl-bis(spermidine) + 3,4-dihydroxybenzoyl-[aryl-carrier protein] = petrobactin + holo-[aryl-carrier protein] + H(+). It participates in siderophore biosynthesis; petrobactin biosynthesis. Involved in the biosynthesis of petrobactin, a catecholate siderophore that functions in both iron acquisition and virulence. Transfers the activated 3,4-dihydroxybenzoate (3,4-DHBA) moiety from 3,4-DHBA-loaded AsbD to different receipient molecules, including N-citryl-spermidine, N8,N'8-citryl-bis(spermidine) and N1-(3,4-dihydroxybenzoyl)-N8,N'8-citryl-bis(spermidine). Also catalyzes the transfer of the activated 3,4-DHBA moiety from 3,4-DHBA-loaded AsbD to spermidine to generate DHB-spermidine (DHB-SP). This is Petrobactin synthase from Bacillus anthracis.